A 235-amino-acid chain; its full sequence is AA9 family lytic polysaccharide monooxygenase D (235 aa).

The first 18 residues, 1–18, serve as a signal peptide directing secretion; the sequence is MKAFFAVLAVVSAPFVLG. Residue histidine 19 coordinates Cu(2+). Residue serine 29 is glycosylated (O-linked (Man...) serine). Cysteine 61 and cysteine 181 are disulfide-bonded. Histidine 94 is a binding site for Cu(2+). The O2 site is built by histidine 167 and glutamine 176. Cu(2+) is bound at residue tyrosine 178. The N-linked (GlcNAc...) asparagine glycan is linked to asparagine 221.

The protein belongs to the polysaccharide monooxygenase AA9 family. Cu(2+) serves as cofactor.

It is found in the secreted. The catalysed reaction is [(1-&gt;4)-beta-D-glucosyl]n+m + reduced acceptor + O2 = 4-dehydro-beta-D-glucosyl-[(1-&gt;4)-beta-D-glucosyl]n-1 + [(1-&gt;4)-beta-D-glucosyl]m + acceptor + H2O.. In terms of biological role, lytic polysaccharide monooxygenase (LPMO) that depolymerizes crystalline and amorphous polysaccharides via the oxidation of scissile alpha- or beta-(1-4)-glycosidic bonds, yielding only C1 oxidation products. Catalysis by LPMOs requires the reduction of the active-site copper from Cu(II) to Cu(I) by a reducing agent and H(2)O(2) or O(2) as a cosubstrate. This chain is AA9 family lytic polysaccharide monooxygenase D, found in Phanerodontia chrysosporium (White-rot fungus).